Here is a 51-residue protein sequence, read N- to C-terminus: Cyclic phosphodiesterase (51 aa).

The active-site Proton donor/acceptor is His-11. Thr-13 lines the substrate pocket. His-38 (proton donor/acceptor) is an active-site residue. Residues Ser-40 and Tyr-43 each coordinate substrate.

This sequence belongs to the 2H phosphoesterase superfamily. CPD1 family.

In terms of biological role, hydrolyzes ADP-ribose 1'',2''-cyclic phosphate (Appr&gt;1) that is produced during tRNA splicing into ADP-ribose 1''-phosphate (Appr-1''p). The protein is Cyclic phosphodiesterase of Triticum aestivum (Wheat).